We begin with the raw amino-acid sequence, 840 residues long: Translation initiation factor IF-2 (840 aa).

Positions arginine 95–arginine 143 are enriched in basic and acidic residues. Disordered stretches follow at residues arginine 95–glycine 155 and lysine 172–proline 256. The span at alanine 144–glycine 155 shows a compositional bias: low complexity. Composition is skewed to basic and acidic residues over residues alanine 175–aspartate 191 and serine 223–arginine 232. The span at arginine 233 to glutamine 247 shows a compositional bias: basic residues. The tr-type G domain occupies threonine 340–lysine 509. Positions glycine 349–threonine 356 are G1. Residue glycine 349–threonine 356 coordinates GTP. The tract at residues glycine 374 to histidine 378 is G2. The tract at residues aspartate 395–glycine 398 is G3. GTP-binding positions include aspartate 395 to histidine 399 and asparagine 449 to aspartate 452. The tract at residues asparagine 449–aspartate 452 is G4. Positions serine 485–lysine 487 are G5.

The protein belongs to the TRAFAC class translation factor GTPase superfamily. Classic translation factor GTPase family. IF-2 subfamily.

It is found in the cytoplasm. In terms of biological role, one of the essential components for the initiation of protein synthesis. Protects formylmethionyl-tRNA from spontaneous hydrolysis and promotes its binding to the 30S ribosomal subunits. Also involved in the hydrolysis of GTP during the formation of the 70S ribosomal complex. This is Translation initiation factor IF-2 from Pseudomonas aeruginosa (strain LESB58).